A 369-amino-acid polypeptide reads, in one-letter code: Dihydroorotate dehydrogenase (quinone) (369 aa).

FMN is bound by residues 66 to 70 and T90; that span reads AGFDK. K70 provides a ligand contact to substrate. Residue 115–119 coordinates substrate; that stretch reads NRMGF. Residues N143 and N176 each contribute to the FMN site. A substrate-binding site is contributed by N176. S179 acts as the Nucleophile in catalysis. N181 contributes to the substrate binding site. Residues K217 and T245 each contribute to the FMN site. 246–247 provides a ligand contact to substrate; sequence NT. FMN-binding positions include G271, G300, and 321-322; that span reads YT.

This sequence belongs to the dihydroorotate dehydrogenase family. Type 2 subfamily. As to quaternary structure, monomer. The cofactor is FMN.

The protein localises to the cell membrane. The enzyme catalyses (S)-dihydroorotate + a quinone = orotate + a quinol. Its pathway is pyrimidine metabolism; UMP biosynthesis via de novo pathway; orotate from (S)-dihydroorotate (quinone route): step 1/1. In terms of biological role, catalyzes the conversion of dihydroorotate to orotate with quinone as electron acceptor. The sequence is that of Dihydroorotate dehydrogenase (quinone) from Nocardia farcinica (strain IFM 10152).